The chain runs to 511 residues: Centrosomal protein CCDC61 (511 aa).

The head domain stretch occupies residues 1–144 (MEVGTVVQEE…PLPLPYLGKP (144 aa)). The stretch at 147 to 272 (AELQKEIRAL…RVKSLTTELA (126 aa)) forms a coiled coil. 2 disordered regions span residues 306–403 (TRVG…SREP) and 447–486 (RGRK…SMDT). Residues 315-335 (GSRERIEDRGRRSEERVRRAD) are compositionally biased toward basic and acidic residues. Over residues 338–352 (GSRNCITRPSPSPTG) the composition is skewed to polar residues. Basic and acidic residues predominate over residues 366 to 378 (DRQRRQKEAELKS).

The protein belongs to the CCDC61 family. As to quaternary structure, forms homodimers (via head domain).

The protein localises to the cytoplasm. It localises to the cytoskeleton. It is found in the microtubule organizing center. The protein resides in the centrosome. Its subcellular location is the centriolar satellite. The protein localises to the cilium basal body. Its function is as follows. Microtubule-binding centrosomal protein required for centriole cohesion, independently of the centrosome-associated protein/CEP250 and rootletin/CROCC linker. In interphase, required for anchoring microtubule at the mother centriole subdistal appendages and for centrosome positioning. During mitosis, may be involved in spindle assembly and chromatin alignment by regulating the organization of spindle microtubules into a symmetrical structure. Plays a non-essential role in ciliogenesis. The sequence is that of Centrosomal protein CCDC61 from Danio rerio (Zebrafish).